The chain runs to 289 residues: Shikimate dehydrogenase (NADP(+)) (289 aa).

Residues 19 to 21 (SMS) and T66 contribute to the shikimate site. K70 functions as the Proton acceptor in the catalytic mechanism. 2 residues coordinate shikimate: N91 and D106. NADP(+) contacts are provided by residues 131–135 (GAGGA), 155–160 (NRTLKK), and L229. Y231 contacts shikimate. Position 252 (G252) interacts with NADP(+).

Belongs to the shikimate dehydrogenase family. As to quaternary structure, homodimer.

The catalysed reaction is shikimate + NADP(+) = 3-dehydroshikimate + NADPH + H(+). It participates in metabolic intermediate biosynthesis; chorismate biosynthesis; chorismate from D-erythrose 4-phosphate and phosphoenolpyruvate: step 4/7. Functionally, involved in the biosynthesis of the chorismate, which leads to the biosynthesis of aromatic amino acids. Catalyzes the reversible NADPH linked reduction of 3-dehydroshikimate (DHSA) to yield shikimate (SA). This chain is Shikimate dehydrogenase (NADP(+)), found in Halothermothrix orenii (strain H 168 / OCM 544 / DSM 9562).